A 269-amino-acid chain; its full sequence is Ubiquinone/menaquinone biosynthesis C-methyltransferase UbiE (269 aa).

Residues Thr92, Asp113, and Asn141–Ala142 contribute to the S-adenosyl-L-methionine site.

This sequence belongs to the class I-like SAM-binding methyltransferase superfamily. MenG/UbiE family.

It catalyses the reaction a 2-demethylmenaquinol + S-adenosyl-L-methionine = a menaquinol + S-adenosyl-L-homocysteine + H(+). The enzyme catalyses a 2-methoxy-6-(all-trans-polyprenyl)benzene-1,4-diol + S-adenosyl-L-methionine = a 5-methoxy-2-methyl-3-(all-trans-polyprenyl)benzene-1,4-diol + S-adenosyl-L-homocysteine + H(+). Its pathway is quinol/quinone metabolism; menaquinone biosynthesis; menaquinol from 1,4-dihydroxy-2-naphthoate: step 2/2. The protein operates within cofactor biosynthesis; ubiquinone biosynthesis. In terms of biological role, methyltransferase required for the conversion of demethylmenaquinol (DMKH2) to menaquinol (MKH2) and the conversion of 2-polyprenyl-6-methoxy-1,4-benzoquinol (DDMQH2) to 2-polyprenyl-3-methyl-6-methoxy-1,4-benzoquinol (DMQH2). The sequence is that of Ubiquinone/menaquinone biosynthesis C-methyltransferase UbiE from Brucella suis (strain ATCC 23445 / NCTC 10510).